The primary structure comprises 63 residues: uncharacterized protein (63 aa).

This is an uncharacterized protein from Haemophilus influenzae (strain ATCC 51907 / DSM 11121 / KW20 / Rd).